The chain runs to 335 residues: GTPase Obg (335 aa).

The Obg domain occupies 1-159 (MKFVDSASIR…REIGLELSIM (159 aa)). Positions 160-332 (ADIGLLGMPN…LVAGLFKLVK (173 aa)) constitute an OBG-type G domain. Residues 166–173 (GMPNAGKS), 191–195 (FTTLH), 212–215 (DIPG), 282–285 (NKMD), and 313–315 (SAL) contribute to the GTP site. Mg(2+) contacts are provided by serine 173 and threonine 193.

This sequence belongs to the TRAFAC class OBG-HflX-like GTPase superfamily. OBG GTPase family. As to quaternary structure, monomer. Mg(2+) is required as a cofactor.

The protein resides in the cytoplasm. An essential GTPase which binds GTP, GDP and possibly (p)ppGpp with moderate affinity, with high nucleotide exchange rates and a fairly low GTP hydrolysis rate. Plays a role in control of the cell cycle, stress response, ribosome biogenesis and in those bacteria that undergo differentiation, in morphogenesis control. The sequence is that of GTPase Obg from Ruthia magnifica subsp. Calyptogena magnifica.